Here is a 429-residue protein sequence, read N- to C-terminus: Tol-Pal system protein TolB (429 aa).

A signal peptide spans 1-28 (MSITPSFSRRSVVSLLAAGAFSSMSAFA).

Belongs to the TolB family. The Tol-Pal system is composed of five core proteins: the inner membrane proteins TolA, TolQ and TolR, the periplasmic protein TolB and the outer membrane protein Pal. They form a network linking the inner and outer membranes and the peptidoglycan layer.

The protein resides in the periplasm. In terms of biological role, part of the Tol-Pal system, which plays a role in outer membrane invagination during cell division and is important for maintaining outer membrane integrity. This Polaromonas naphthalenivorans (strain CJ2) protein is Tol-Pal system protein TolB.